The chain runs to 220 residues: MTINNINSFIDHTQLKPEATPGQIEKLCQEAIDYKFKAVCVNPVHVNLAANLLKDSEVEIASVVGFPLGASATDVKEYEAKKAVEHGASEIDMVINIGLLKNEQDMEVIEDISSVVNTVPVGIVVKVIIETCLLSDEEKIKACELAKRAGAHYVKTSTGFSSSGATVEDVKIMKKTVGEKLGVKASGGIRDLETAQKMIEAGATRIGASKSVEIVKSQSN.

Aspartate 92 serves as the catalytic Proton donor/acceptor. Lysine 155 functions as the Schiff-base intermediate with acetaldehyde in the catalytic mechanism. Lysine 184 functions as the Proton donor/acceptor in the catalytic mechanism.

Belongs to the DeoC/FbaB aldolase family. DeoC type 1 subfamily.

It is found in the cytoplasm. It carries out the reaction 2-deoxy-D-ribose 5-phosphate = D-glyceraldehyde 3-phosphate + acetaldehyde. Its pathway is carbohydrate degradation; 2-deoxy-D-ribose 1-phosphate degradation; D-glyceraldehyde 3-phosphate and acetaldehyde from 2-deoxy-alpha-D-ribose 1-phosphate: step 2/2. Functionally, catalyzes a reversible aldol reaction between acetaldehyde and D-glyceraldehyde 3-phosphate to generate 2-deoxy-D-ribose 5-phosphate. The chain is Deoxyribose-phosphate aldolase from Natranaerobius thermophilus (strain ATCC BAA-1301 / DSM 18059 / JW/NM-WN-LF).